The sequence spans 308 residues: 4-hydroxyproline 2-epimerase (308 aa).

Catalysis depends on C88, which acts as the Proton acceptor. Residues G89–H90, H208, and D232 contribute to the substrate site. C236 acts as the Proton donor in catalysis. Position 237–238 (G237–T238) interacts with substrate.

The protein belongs to the proline racemase family.

It carries out the reaction trans-4-hydroxy-L-proline = cis-4-hydroxy-D-proline. Catalyzes the epimerization of trans-4-hydroxy-L-proline (t4LHyp) to cis-4-hydroxy-D-proline (c4DHyp). Is likely involved in a degradation pathway that converts t4LHyp to alpha-ketoglutarate. Can also catalyze the epimerization of trans-3-hydroxy-L-proline (t3LHyp) to cis-3-hydroxy-D-proline (c3DHyp), albeit with 200-fold lower efficiency. The chain is 4-hydroxyproline 2-epimerase from Pseudomonas putida (strain ATCC 700007 / DSM 6899 / JCM 31910 / BCRC 17059 / LMG 24140 / F1).